The primary structure comprises 263 residues: Glucosamine-6-phosphate deaminase (263 aa).

Asp72 serves as the catalytic Proton acceptor; for enolization step. The active-site For ring-opening step is the Asp141. His143 serves as the catalytic Proton acceptor; for ring-opening step. The active-site For ring-opening step is Glu148.

The protein belongs to the glucosamine/galactosamine-6-phosphate isomerase family. NagB subfamily.

The enzyme catalyses alpha-D-glucosamine 6-phosphate + H2O = beta-D-fructose 6-phosphate + NH4(+). Its pathway is amino-sugar metabolism; N-acetylneuraminate degradation; D-fructose 6-phosphate from N-acetylneuraminate: step 5/5. Its activity is regulated as follows. Allosterically activated by N-acetylglucosamine 6-phosphate (GlcNAc6P). Its function is as follows. Catalyzes the reversible isomerization-deamination of glucosamine 6-phosphate (GlcN6P) to form fructose 6-phosphate (Fru6P) and ammonium ion. This is Glucosamine-6-phosphate deaminase from Porphyromonas gingivalis (strain ATCC BAA-308 / W83).